Consider the following 1447-residue polypeptide: Netrin receptor DCC (1447 aa).

The first 25 residues, 1 to 25, serve as a signal peptide directing secretion; sequence MENSLRCVWVPKLAFVLFGASLFSA. Ig-like C2-type domains lie at 26–135, 139–229, 234–326, and 331–416; these read HLQV…AKVA, PLRF…AEVR, PGLH…AELT, and PWFL…AQLI. Residues 26-1097 lie on the Extracellular side of the membrane; sequence HLQVTGFQIK…GSVTPQKNSN (1072 aa). 3 disulfides stabilise this stretch: cysteine 61-cysteine 117, cysteine 161-cysteine 212, and cysteine 261-cysteine 310. Asparagine 94 carries an N-linked (GlcNAc...) asparagine glycan. Residues asparagine 299 and asparagine 318 are each glycosylated (N-linked (GlcNAc...) asparagine). A disulfide bond links cysteine 352 and cysteine 400. Fibronectin type-III domains are found at residues 431-524, 530-620, 625-718, 728-821, 846-942, and 947-1044; these read APRD…TQPE, PVEN…TLSD, PPQN…TPEN, QPSS…TDPT, PPVG…TYEA, and APKD…TLKV. A glycan (N-linked (GlcNAc...) asparagine) is linked at asparagine 478. N-linked (GlcNAc...) asparagine glycosylation is found at asparagine 628 and asparagine 702. A helical membrane pass occupies residues 1098–1122; the sequence is LLVIIVVTVGVITVLVVVIVAVICT. Topologically, residues 1123 to 1447 are cytoplasmic; sequence RRSSAQQRKK…QLNAITGSAF (325 aa). Disordered regions lie at residues 1126-1152 and 1165-1222; these read SAQQRKKRATHSAGKRKGSQKDLRPPD and IEKP…TLER. The span at 1129–1143 shows a compositional bias: basic residues; that stretch reads QRKKRATHSAGKRKG. Serine 1178 carries the post-translational modification Phosphoserine; by MAPK1. Polar residues predominate over residues 1179–1221; the sequence is PIQSCQDLTPVSHSQSETQLGSKSTSHSGQDTEEAGSSMSTLE. Phosphothreonine; by MAPK1 is present on threonine 1187. Residue serine 1267 is modified to Phosphoserine; by MAPK1. 2 disordered regions span residues 1288-1330 and 1394-1419; these read SVDR…PSRT and LLPVSVPTAPEVSEESHKPTEDSANV. Residues 1297–1310 are compositionally biased toward polar residues; it reads RSQSVSEGPTTQQP. Residues 1432-1439 are interaction with MYO10; the sequence is LEGLMKQL.

This sequence belongs to the immunoglobulin superfamily. DCC family. In terms of assembly, interacts with the cytoplasmic part of UNC5A, UNC5B, UNC5C and probably UNC5D. Interacts with DSCAM. Interacts with PTK2/FAK1 and MAPK1. Interacts with NTN1. Interacts with MYO10. Interacts with CBLN4; this interaction can be competed by NTN1. Interacts with SIAH1 and SIAH2. Post-translationally, ubiquitinated; mediated by SIAH1 or SIAH2 and leading to its subsequent proteasomal degradation. In terms of tissue distribution, found in axons of the central and peripheral nervous system and in differentiated cell types of the intestine. Not expressed in colorectal tumor cells that lost their capacity to differentiate into mucus producing cells.

The protein localises to the membrane. Its function is as follows. Receptor for netrin required for axon guidance. Mediates axon attraction of neuronal growth cones in the developing nervous system upon ligand binding. Its association with UNC5 proteins may trigger signaling for axon repulsion. It also acts as a dependence receptor required for apoptosis induction when not associated with netrin ligand. Implicated as a tumor suppressor gene. This is Netrin receptor DCC (DCC) from Homo sapiens (Human).